Consider the following 874-residue polypeptide: Alanine--tRNA ligase (874 aa).

Positions 562, 566, 663, and 667 each coordinate Zn(2+).

Belongs to the class-II aminoacyl-tRNA synthetase family. It depends on Zn(2+) as a cofactor.

It is found in the cytoplasm. It catalyses the reaction tRNA(Ala) + L-alanine + ATP = L-alanyl-tRNA(Ala) + AMP + diphosphate. Its function is as follows. Catalyzes the attachment of alanine to tRNA(Ala) in a two-step reaction: alanine is first activated by ATP to form Ala-AMP and then transferred to the acceptor end of tRNA(Ala). Also edits incorrectly charged Ser-tRNA(Ala) and Gly-tRNA(Ala) via its editing domain. This Bordetella bronchiseptica (strain ATCC BAA-588 / NCTC 13252 / RB50) (Alcaligenes bronchisepticus) protein is Alanine--tRNA ligase.